The primary structure comprises 251 residues: Ubiquinone/menaquinone biosynthesis C-methyltransferase UbiE (251 aa).

S-adenosyl-L-methionine-binding positions include T74, D95, and 123–124 (NA).

It belongs to the class I-like SAM-binding methyltransferase superfamily. MenG/UbiE family.

It carries out the reaction a 2-demethylmenaquinol + S-adenosyl-L-methionine = a menaquinol + S-adenosyl-L-homocysteine + H(+). It catalyses the reaction a 2-methoxy-6-(all-trans-polyprenyl)benzene-1,4-diol + S-adenosyl-L-methionine = a 5-methoxy-2-methyl-3-(all-trans-polyprenyl)benzene-1,4-diol + S-adenosyl-L-homocysteine + H(+). It functions in the pathway quinol/quinone metabolism; menaquinone biosynthesis; menaquinol from 1,4-dihydroxy-2-naphthoate: step 2/2. Its pathway is cofactor biosynthesis; ubiquinone biosynthesis. Methyltransferase required for the conversion of demethylmenaquinol (DMKH2) to menaquinol (MKH2) and the conversion of 2-polyprenyl-6-methoxy-1,4-benzoquinol (DDMQH2) to 2-polyprenyl-3-methyl-6-methoxy-1,4-benzoquinol (DMQH2). This Shewanella baltica (strain OS155 / ATCC BAA-1091) protein is Ubiquinone/menaquinone biosynthesis C-methyltransferase UbiE.